We begin with the raw amino-acid sequence, 255 residues long: MWNPAVYLTYADHRGRPYYDLLSRVDAREPRRIVDLGCGPGNLTRTLTQRWPGAVVEAWDSSEEMVTAARERGVDARVGDVRDWAPLPDTDVVVSNATLHWVPEHPDLLLRWAGQLRAGSWIAFQVPGNFDAPSHRAVRDLVSSARWAHLLRDFPFEKSEVVRPAAGYAELLTDAGCTVDAWETTYVHELTGEKPVLEWIGGTALRPVRAALPDHDWQEFRAELIPLLDAAYPRRADGITFFPFRRIFVVARVKN.

This sequence belongs to the methyltransferase superfamily. Tam family.

Its subcellular location is the cytoplasm. It catalyses the reaction trans-aconitate + S-adenosyl-L-methionine = (E)-3-(methoxycarbonyl)pent-2-enedioate + S-adenosyl-L-homocysteine. Its function is as follows. Catalyzes the S-adenosylmethionine monomethyl esterification of trans-aconitate. This Mycolicibacterium gilvum (strain PYR-GCK) (Mycobacterium gilvum (strain PYR-GCK)) protein is Trans-aconitate 2-methyltransferase.